A 243-amino-acid polypeptide reads, in one-letter code: Dirigent protein 16 (243 aa).

The signal sequence occupies residues 1-24 (MMIKQSPFLLLTTILFTVAVFVAA).

Belongs to the plant dirigent protein family. Homodimer.

The protein localises to the secreted. The protein resides in the extracellular space. It is found in the apoplast. Dirigent proteins impart stereoselectivity on the phenoxy radical-coupling reaction, yielding optically active lignans from two molecules of coniferyl alcohol in the biosynthesis of lignans, flavonolignans, and alkaloids and thus plays a central role in plant secondary metabolism. This Arabidopsis thaliana (Mouse-ear cress) protein is Dirigent protein 16 (DIR16).